We begin with the raw amino-acid sequence, 330 residues long: Aspartate--ammonia ligase (330 aa).

This sequence belongs to the class-II aminoacyl-tRNA synthetase family. AsnA subfamily.

Its subcellular location is the cytoplasm. The catalysed reaction is L-aspartate + NH4(+) + ATP = L-asparagine + AMP + diphosphate + H(+). It functions in the pathway amino-acid biosynthesis; L-asparagine biosynthesis; L-asparagine from L-aspartate (ammonia route): step 1/1. The sequence is that of Aspartate--ammonia ligase from Glaesserella parasuis serovar 5 (strain SH0165) (Haemophilus parasuis).